The chain runs to 268 residues: Aliphatic sulfonates import ATP-binding protein SsuB 2 (268 aa).

Residues 15-236 (LAVRKLQKTF…VRGSHRLAAL (222 aa)) form the ABC transporter domain. 47 to 54 (GRSGCGKS) is an ATP binding site.

The protein belongs to the ABC transporter superfamily. Aliphatic sulfonates importer (TC 3.A.1.17.2) family. As to quaternary structure, the complex is composed of two ATP-binding proteins (SsuB), two transmembrane proteins (SsuC) and a solute-binding protein (SsuA).

Its subcellular location is the cell inner membrane. The enzyme catalyses ATP + H2O + aliphatic sulfonate-[sulfonate-binding protein]Side 1 = ADP + phosphate + aliphatic sulfonateSide 2 + [sulfonate-binding protein]Side 1.. Part of the ABC transporter complex SsuABC involved in aliphatic sulfonates import. Responsible for energy coupling to the transport system. This chain is Aliphatic sulfonates import ATP-binding protein SsuB 2, found in Pseudomonas fluorescens (strain ATCC BAA-477 / NRRL B-23932 / Pf-5).